A 153-amino-acid chain; its full sequence is Transcriptional repressor NrdR (153 aa).

A zinc finger lies at 3-34 (CPSCSHNGTRVLDSRPVDEGRSIRRRRECESC). An ATP-cone domain is found at 49-139 (LIVVKKEGTR…VYRQFKDLNV (91 aa)).

This sequence belongs to the NrdR family. Zn(2+) serves as cofactor.

Negatively regulates transcription of bacterial ribonucleotide reductase nrd genes and operons by binding to NrdR-boxes. This chain is Transcriptional repressor NrdR, found in Bacillus anthracis (strain A0248).